We begin with the raw amino-acid sequence, 346 residues long: Dihydroorotase (346 aa).

Zn(2+) is bound by residues histidine 14 and histidine 16. Residues 16–18 (HLR) and asparagine 42 each bind substrate. Residues lysine 100, histidine 137, and histidine 175 each coordinate Zn(2+). Lysine 100 is subject to N6-carboxylysine. Histidine 137 is a substrate binding site. Leucine 220 provides a ligand contact to substrate. Position 248 (aspartate 248) interacts with Zn(2+). Aspartate 248 is a catalytic residue. 2 residues coordinate substrate: histidine 252 and alanine 264.

The protein belongs to the metallo-dependent hydrolases superfamily. DHOase family. Class II DHOase subfamily. As to quaternary structure, homodimer. Requires Zn(2+) as cofactor.

It carries out the reaction (S)-dihydroorotate + H2O = N-carbamoyl-L-aspartate + H(+). The protein operates within pyrimidine metabolism; UMP biosynthesis via de novo pathway; (S)-dihydroorotate from bicarbonate: step 3/3. Functionally, catalyzes the reversible cyclization of carbamoyl aspartate to dihydroorotate. The polypeptide is Dihydroorotase (Ruegeria sp. (strain TM1040) (Silicibacter sp.)).